The primary structure comprises 104 residues: Pole-localizer protein TmaR (104 aa).

2 coiled-coil regions span residues 7–34 and 76–96; these read IVNQ…NRKR and SAEI…LTEE.

It belongs to the pole-localizer TmaR family.

It localises to the cytoplasm. Functionally, pole-localizer protein involved in the regulation of several cellular processes. The polypeptide is Pole-localizer protein TmaR (Vibrio atlanticus (strain LGP32) (Vibrio splendidus (strain Mel32))).